We begin with the raw amino-acid sequence, 333 residues long: Ketol-acid reductoisomerase (NADP(+)) (333 aa).

The region spanning 2 to 182 (ANIYYDSDCD…GGGRAGILET (181 aa)) is the KARI N-terminal Rossmann domain. NADP(+)-binding positions include 25–28 (YGSQ), Lys-48, Ser-51, Ser-53, and 83–86 (DTIQ). The active site involves His-108. Gly-134 contributes to the NADP(+) binding site. A KARI C-terminal knotted domain is found at 183-331 (SFREETETDL…KKLRSMMKWL (149 aa)). Asp-191, Glu-195, Glu-227, and Glu-231 together coordinate Mg(2+). A substrate-binding site is contributed by Ser-252.

It belongs to the ketol-acid reductoisomerase family. Mg(2+) is required as a cofactor.

The catalysed reaction is (2R)-2,3-dihydroxy-3-methylbutanoate + NADP(+) = (2S)-2-acetolactate + NADPH + H(+). The enzyme catalyses (2R,3R)-2,3-dihydroxy-3-methylpentanoate + NADP(+) = (S)-2-ethyl-2-hydroxy-3-oxobutanoate + NADPH + H(+). The protein operates within amino-acid biosynthesis; L-isoleucine biosynthesis; L-isoleucine from 2-oxobutanoate: step 2/4. It participates in amino-acid biosynthesis; L-valine biosynthesis; L-valine from pyruvate: step 2/4. Involved in the biosynthesis of branched-chain amino acids (BCAA). Catalyzes an alkyl-migration followed by a ketol-acid reduction of (S)-2-acetolactate (S2AL) to yield (R)-2,3-dihydroxy-isovalerate. In the isomerase reaction, S2AL is rearranged via a Mg-dependent methyl migration to produce 3-hydroxy-3-methyl-2-ketobutyrate (HMKB). In the reductase reaction, this 2-ketoacid undergoes a metal-dependent reduction by NADPH to yield (R)-2,3-dihydroxy-isovalerate. The polypeptide is Ketol-acid reductoisomerase (NADP(+)) (Leptospira interrogans serogroup Icterohaemorrhagiae serovar copenhageni (strain Fiocruz L1-130)).